The primary structure comprises 1399 residues: MKDLLNLLKNQGQVEEFDAIRIGLASPEMIRSWSFGEVKKPETINYRTFKPERDGLFCAKIFGPVKDYECLCGKYKRLKHRGVICEKCGVEVALAKVRRERMAHIELASPVAHIWFLKSLPSRIGLLMDMTLRDIERVLYFESYVVIDPGMTTLEKGQLLNDEQYFEALEEFGDDFDARMGAEAVRELLHAIDLEHEIGRLREEIPQTNSETKIKKLSKRLKLMEAFQGSGNLPEWMVLTVLPVLPPDLRPLVPLDGGRFATSDLNDLYRRVINRNNRLKRLLDLSAPDIIVRNEKRMLQEAVDALLDNGRRGRAITGSNKRPLKSLADMIKGKQGRFRQNLLGKRVDYSGRSVITVGPTLRLHQCGLPKKMALELFKPFIFGKLEMRGLATTIKAAKKMVERELPEVWDVLAEVIREHPVLLNRAPTLHRLGIQAFEPVLIEGKAIQLHPLVCAAYNADFDGDQMAVHVPLTLEAQLEARALMMSTNNILSPANGEPIIVPSQDVVLGLYYMTREAINAKGEGRVFADLQEVDRVFRAGEAALHAKIKVRINETVKDRDGSITKNTRIVDTTVGRALLFQVVPAGLPYDVVNQPMKKKAISKLINQCYRVVGLKETVIFADQLMYTGFAYSTISGVSIGVNDFVIPDEKARIIGTATDEVKEIESQYASGLVTQGEKYNKVIDLWSKANDEVSKAMMANLSKEKVIDRNGDEVEQESFNSMYMMADSGARGSAAQIRQLAGMRGLMAKPDGSIIETPITANFREGLSVLQYFISTHGARKGLADTALKTANSGYLTRRLVDVAQDLVVTEIDCGTEQGLLMTPHIEGGDVVEPLGERVLGRVIARDVFKPGTEDVIVPAGTLVDEQWVEFIELNSIDEVIVRSPINCETRYGICAKCYGRDLARGHQVNIGEAVGVIAAQSIGEPGTQLTMRTFHIGGAASRTSAADSVQVKNGGMVRLHNLKQVVRADGNLVAVSRSGELAIADEFGRERERYKLPYGAVISVKEGEKVEAGAIVAKWDPHTHPIVTELKGTVTFVGMEENITIKRQTDELTGLTNIEVMDVKDRPAAGKEIRPAIKMVDANGKDLYLPGTDVPAQYFLPANALVGVADGAQIGVGDVIARIPQETSKTRDITGGLPRVADLFEARRPKEASILAEVSGTIAFGKETKGKRRLVITPTDGSDPYEELIPKWRHLNVFEGEQVNRGEVISDGPSDPHDILRLLGVSALAKYIVNEIQDVYRLQGVKINDKHIETILRQMLRKVEIAESGDSSFIKGDQMELTQVLVENERLAAEDKFISKYTRVLLGITKASLSTESFISAASFQETTRVLTEAAVTGKRDYLRGLKENVVVGRLIPAGTGLAYHSERKRRRDADKPLRVSASEVEAALTEALNSSGN.

Residues C70, C72, C85, and C88 each coordinate Zn(2+). Mg(2+)-binding residues include D460, D462, and D464. Zn(2+) is bound by residues C814, C888, C895, and C898.

The protein belongs to the RNA polymerase beta' chain family. As to quaternary structure, the RNAP catalytic core consists of 2 alpha, 1 beta, 1 beta' and 1 omega subunit. When a sigma factor is associated with the core the holoenzyme is formed, which can initiate transcription. Requires Mg(2+) as cofactor. It depends on Zn(2+) as a cofactor.

It catalyses the reaction RNA(n) + a ribonucleoside 5'-triphosphate = RNA(n+1) + diphosphate. Its function is as follows. DNA-dependent RNA polymerase catalyzes the transcription of DNA into RNA using the four ribonucleoside triphosphates as substrates. In Pseudomonas entomophila (strain L48), this protein is DNA-directed RNA polymerase subunit beta'.